Consider the following 260-residue polypeptide: MLAVLLFAALVATAYSQEYGPAKPDVKIIPHPKTVVHEDARHVHRQVHLVKQVPVHRTRVQTIINEVPRIIRKPKQIRKTRVFRQYYPVDVPVLRKVTVVKPVHLERKVPVPRMVVKDVPHHVVRTKKVDVPIDVPIKKIVEKKVVRYVENKIFRPRPVVQEKVRVEHVPQPFPVDQVVVKKNPRPRLIVEKKPVPVIRHIHTHKKQAVAVPRVKTVAEVVPNVVHQKVTYPVGKGGGSVQIPGGPLPVPEHYKYKGYDK.

The first 16 residues, 1–16, serve as a signal peptide directing secretion; that stretch reads MLAVLLFAALVATAYS.

Prismatic layer of shell (at protein level). Expressed primarily in the mantle with highest level in the mantle edge and lower level in the mantle pallium.

It localises to the secreted. The polypeptide is Mantle protein (Pinctada maxima (Silver-lipped pearl oyster)).